The chain runs to 80 residues: Large ribosomal subunit protein bL31 (80 aa).

It belongs to the bacterial ribosomal protein bL31 family. Type A subfamily. In terms of assembly, part of the 50S ribosomal subunit.

Its function is as follows. Binds the 23S rRNA. The protein is Large ribosomal subunit protein bL31 of Nostoc punctiforme (strain ATCC 29133 / PCC 73102).